The primary structure comprises 239 residues: tRNA (guanine-N(7)-)-methyltransferase (239 aa).

Residues 1 to 13 (MEAEVQQGQQSPE) show a composition bias toward polar residues. The disordered stretch occupies residues 1-30 (MEAEVQQGQQSPEGQLEKRPPSPPWAGIPL). Residues aspartate 72, glutamate 97, asparagine 124, and aspartate 147 each contribute to the S-adenosyl-L-methionine site. Aspartate 147 is an active-site residue. Substrate-binding residues include lysine 151 and aspartate 183.

It belongs to the class I-like SAM-binding methyltransferase superfamily. TrmB family.

It catalyses the reaction guanosine(46) in tRNA + S-adenosyl-L-methionine = N(7)-methylguanosine(46) in tRNA + S-adenosyl-L-homocysteine. Its pathway is tRNA modification; N(7)-methylguanine-tRNA biosynthesis. Functionally, catalyzes the formation of N(7)-methylguanine at position 46 (m7G46) in tRNA. This chain is tRNA (guanine-N(7)-)-methyltransferase, found in Synechococcus sp. (strain JA-2-3B'a(2-13)) (Cyanobacteria bacterium Yellowstone B-Prime).